A 389-amino-acid chain; its full sequence is Odorant receptor 85c (389 aa).

The Cytoplasmic portion of the chain corresponds to 1–33; the sequence is MKFMKYAVFFYTSVGIEPYTIDSRSKKASLWSH. Residues 34–54 traverse the membrane as a helical segment; the sequence is LLFWANVINLSVIVFGEILYL. The Extracellular portion of the chain corresponds to 55-66; it reads GVAYSDGKFIDA. The helical transmembrane segment at 67-87 threads the bilayer; that stretch reads VTVLSYIGFVIVGMSKMFFIW. Residues 88–130 are Cytoplasmic-facing; the sequence is WKKTDLSDLVKELEHIYPNGKAEEEMYRLDRYLRSCSRISITY. Residues 131–151 traverse the membrane as a helical segment; that stretch reads ALLYSVLIWTFNLFSIMQFLV. The Extracellular segment spans residues 152–199; it reads YEKLLKIRVVGQTLPYLMYFPWNWHENWTYYVLLFCQNFAGHTSASGQ. Asn178 is a glycosylation site (N-linked (GlcNAc...) asparagine). The helical transmembrane segment at 200–220 threads the bilayer; that stretch reads ISTDLLLCAVATQVVMHFDYL. Over 221-259 the chain is Cytoplasmic; sequence ARVVEKQVLDRDWSENSRFLAKTVQYHQRILRLMDVLND. The helical transmembrane segment at 260 to 280 threads the bilayer; the sequence is IFGIPLLLNFMVSTFVICFVG. At 281–290 the chain is on the extracellular side; sequence FQMTVGVPPD. The helical transmembrane segment at 291–311 threads the bilayer; that stretch reads IMIKLFLFLFSSLSQVYLICH. At 312-359 the chain is on the cytoplasmic side; that stretch reads YGQLIADASSSLSISAYKQNWQNADIRYRRALVFFIARPQRTTYLKAT. The helical transmembrane segment at 360–380 threads the bilayer; sequence IFMNITRATMTDLLQVSYKFF. At 381–389 the chain is on the extracellular side; sequence ALLRTMYIK.

It belongs to the insect chemoreceptor superfamily. Heteromeric odorant receptor channel (TC 1.A.69) family. Or49a subfamily. In terms of assembly, interacts with Orco. Complexes exist early in the endomembrane system in olfactory sensory neurons (OSNs), coupling these complexes to the conserved ciliary trafficking pathway.

The protein localises to the cell membrane. Functionally, odorant receptor which mediates acceptance or avoidance behavior, depending on its substrates. The odorant receptor repertoire encodes a large collection of odor stimuli that vary widely in identity, intensity, and duration. May form a complex with Orco to form odorant-sensing units, providing sensitive and prolonged odorant signaling and calcium permeability. The protein is Odorant receptor 85c (Or85c) of Drosophila melanogaster (Fruit fly).